Consider the following 318-residue polypeptide: 2-keto-3-deoxygluconate permease (318 aa).

The next 10 helical transmembrane spans lie at 10 to 30 (IPGG…TFTP), 42 to 62 (GLIT…GASI), 76 to 96 (VLVV…GTFL), 105 to 125 (MLAG…NGGL), 139 to 159 (AGAF…VILG), 163 to 183 (IATF…IGFA), 199 to 219 (VQTL…LSVI), 224 to 244 (FAGI…LILA), 263 to 283 (AGAA…FAPV), and 289 to 309 (ALVA…TALW).

This sequence belongs to the KdgT transporter family.

It localises to the cell inner membrane. It carries out the reaction 2-dehydro-3-deoxy-D-gluconate(in) + H(+)(in) = 2-dehydro-3-deoxy-D-gluconate(out) + H(+)(out). In terms of biological role, catalyzes the proton-dependent uptake of 2-keto-3-deoxygluconate (KDG) into the cell. The chain is 2-keto-3-deoxygluconate permease from Pectobacterium carotovorum subsp. carotovorum (Erwinia carotovora subsp. carotovora).